The following is a 271-amino-acid chain: Dirigent protein 17 (271 aa).

Residues 1 to 12 are compositionally biased toward polar residues; it reads MEDTGSIKQEAQ. Positions 1–22 are disordered; the sequence is MEDTGSIKQEAQSHPPGIFEIP. An N-linked (GlcNAc...) asparagine glycan is attached at Asn-255.

This sequence belongs to the plant dirigent protein family. Homodimer.

It is found in the secreted. The protein resides in the extracellular space. The protein localises to the apoplast. Its function is as follows. Dirigent proteins impart stereoselectivity on the phenoxy radical-coupling reaction, yielding optically active lignans from two molecules of coniferyl alcohol in the biosynthesis of lignans, flavonolignans, and alkaloids and thus plays a central role in plant secondary metabolism. The polypeptide is Dirigent protein 17 (DIR17) (Arabidopsis thaliana (Mouse-ear cress)).